The sequence spans 265 residues: Urease accessory protein UreH (265 aa).

The protein belongs to the UreD family. UreH, UreF and UreG form a complex that acts as a GTP-hydrolysis-dependent molecular chaperone, activating the urease apoprotein by helping to assemble the nickel containing metallocenter of UreC. The UreE protein probably delivers the nickel.

It localises to the cytoplasm. Its function is as follows. Required for maturation of urease via the functional incorporation of the urease nickel metallocenter. The polypeptide is Urease accessory protein UreH (Helicobacter pylori (strain J99 / ATCC 700824) (Campylobacter pylori J99)).